Consider the following 145-residue polypeptide: Small ribosomal subunit protein bS6 (145 aa).

Residues 113 to 132 (ENMKKNERKAPKEPVKKDEE) show a composition bias toward basic and acidic residues. Positions 113–145 (ENMKKNERKAPKEPVKKDEEENKESEEEITSEE) are disordered. Positions 133 to 145 (ENKESEEEITSEE) are enriched in acidic residues.

This sequence belongs to the bacterial ribosomal protein bS6 family.

In terms of biological role, binds together with bS18 to 16S ribosomal RNA. The protein is Small ribosomal subunit protein bS6 of Campylobacter hominis (strain ATCC BAA-381 / DSM 21671 / CCUG 45161 / LMG 19568 / NCTC 13146 / CH001A).